The primary structure comprises 429 residues: Ribosomal RNA small subunit methyltransferase B (429 aa).

S-adenosyl-L-methionine-binding positions include 254–260 (CAAPGGK), Asp-277, Asp-303, and Asp-322. Residue Cys-375 is the Nucleophile of the active site. The interval 397–419 (ALSETGTPDQPGQQNLPGGEEGD) is disordered. Residues 400–412 (ETGTPDQPGQQNL) show a composition bias toward polar residues.

The protein belongs to the class I-like SAM-binding methyltransferase superfamily. RsmB/NOP family.

The protein resides in the cytoplasm. It catalyses the reaction cytidine(967) in 16S rRNA + S-adenosyl-L-methionine = 5-methylcytidine(967) in 16S rRNA + S-adenosyl-L-homocysteine + H(+). Specifically methylates the cytosine at position 967 (m5C967) of 16S rRNA. The polypeptide is Ribosomal RNA small subunit methyltransferase B (Salmonella paratyphi B (strain ATCC BAA-1250 / SPB7)).